The chain runs to 106 residues: ATP-dependent Clp protease adapter protein ClpS (106 aa).

This sequence belongs to the ClpS family. Binds to the N-terminal domain of the chaperone ClpA.

Functionally, involved in the modulation of the specificity of the ClpAP-mediated ATP-dependent protein degradation. This chain is ATP-dependent Clp protease adapter protein ClpS, found in Serratia proteamaculans (strain 568).